The primary structure comprises 216 residues: Adenylate kinase (216 aa).

10-15 (GAGKGT) is an ATP binding site. The segment at 30–59 (STGDMFRAAMKAETEMGLQAKSFIDKGALV) is NMP. AMP contacts are provided by residues T31, R36, 57–59 (ALV), 85–88 (GFPR), and Q92. The segment at 126–163 (GRRICKECGATYHLEFNAPAKADVCDKCGGELYQRSDD) is LID. Residue R127 participates in ATP binding. Zn(2+)-binding residues include C130 and C133. Residue 136–137 (TY) participates in ATP binding. 2 residues coordinate Zn(2+): C150 and C153. 2 residues coordinate AMP: R160 and R171. Q199 lines the ATP pocket.

The protein belongs to the adenylate kinase family. In terms of assembly, monomer.

It localises to the cytoplasm. It carries out the reaction AMP + ATP = 2 ADP. Its pathway is purine metabolism; AMP biosynthesis via salvage pathway; AMP from ADP: step 1/1. Its function is as follows. Catalyzes the reversible transfer of the terminal phosphate group between ATP and AMP. Plays an important role in cellular energy homeostasis and in adenine nucleotide metabolism. This chain is Adenylate kinase, found in Bacillus anthracis (strain A0248).